Reading from the N-terminus, the 103-residue chain is Large ribosomal subunit protein eL14 (103 aa).

Belongs to the eukaryotic ribosomal protein eL14 family.

This Pyrobaculum aerophilum (strain ATCC 51768 / DSM 7523 / JCM 9630 / CIP 104966 / NBRC 100827 / IM2) protein is Large ribosomal subunit protein eL14.